Here is a 314-residue protein sequence, read N- to C-terminus: Methionyl-tRNA formyltransferase (314 aa).

110–113 (SLLP) contacts (6S)-5,6,7,8-tetrahydrofolate.

The protein belongs to the Fmt family.

The catalysed reaction is L-methionyl-tRNA(fMet) + (6R)-10-formyltetrahydrofolate = N-formyl-L-methionyl-tRNA(fMet) + (6S)-5,6,7,8-tetrahydrofolate + H(+). Functionally, attaches a formyl group to the free amino group of methionyl-tRNA(fMet). The formyl group appears to play a dual role in the initiator identity of N-formylmethionyl-tRNA by promoting its recognition by IF2 and preventing the misappropriation of this tRNA by the elongation apparatus. The protein is Methionyl-tRNA formyltransferase of Levilactobacillus brevis (strain ATCC 367 / BCRC 12310 / CIP 105137 / JCM 1170 / LMG 11437 / NCIMB 947 / NCTC 947) (Lactobacillus brevis).